The primary structure comprises 195 residues: Glycine-rich protein A3 (195 aa).

2 disordered regions span residues 23-103 and 159-182; these read AGGG…GVAG and VMES…GSNL. Residues 47-77 show a composition bias toward gly residues; it reads PAGGGYPPQGYPPAGGGYPPQGYPPAGGGYP. Positions 82 to 94 are enriched in low complexity; sequence PPAGHHSGSSAPH. Residues 163 to 175 show a composition bias toward basic and acidic residues; that stretch reads LSRESTGRARSTD.

This Daucus carota (Wild carrot) protein is Glycine-rich protein A3.